Reading from the N-terminus, the 258-residue chain is Phycoerythrobilin:ferredoxin oxidoreductase (258 aa).

Belongs to the HY2 family.

It catalyses the reaction (3Z)-phycoerythrobilin + oxidized 2[4Fe-4S]-[ferredoxin] = 15,16-dihydrobiliverdin + reduced 2[4Fe-4S]-[ferredoxin] + 2 H(+). Its function is as follows. Catalyzes the two-electron reduction of the C2 and C3(1) diene system of 15,16-dihydrobiliverdin. This Prochlorococcus marinus (strain NATL1A) protein is Phycoerythrobilin:ferredoxin oxidoreductase.